A 105-amino-acid chain; its full sequence is BLOC-1-related complex subunit 7 (105 aa).

The protein belongs to the BORCS7 family. Component of the BLOC-one-related complex (BORC) which is composed of BLOC1S1, BLOC1S2, BORCS5, BORCS6, BORCS7, BORCS8, KXD1 and SNAPIN.

The protein resides in the lysosome membrane. In terms of biological role, as part of the BORC complex may play a role in lysosomes movement and localization at the cell periphery. Associated with the cytosolic face of lysosomes, the BORC complex may recruit ARL8B and couple lysosomes to microtubule plus-end-directed kinesin motor. In Mus musculus (Mouse), this protein is BLOC-1-related complex subunit 7.